The following is a 384-amino-acid chain: MYMKKPAIPDDVIERVQQGKCTKEDALLLLEGNPFELFELANKLRASTVGDVVSYVVNRNIYITNKCVGTCGFCAYRTDEGYILSIEEILKQTEEAREAGAVEVCVQGGYTPEADMEFYLEIIEAIKSGFPDICIHALSPMEVNYAAGLSGMSVEDALRKLKKCGLDSLTGTSAEILSDRVRKIICPGKITTQQWVDTVTAAHRAGISTNSTIMYGHVETLEERLDHVFTIREIQKETGGISELIPMSFLPYNNPIGEKMMASGKFTSTGLEDLQLIAISRIILHTHVNNIQATWVKLGKKLAQFALQCGANDLGGTLMEDQISTASGGSYGEYVSPAEFEWMIKGAGRVPIQRDTLYRKVEPRLPASEGLLPGYVKPKMGSKE.

In terms of domain architecture, Radical SAM core spans 53-286 (VSYVVNRNIY…IAISRIILHT (234 aa)). The [4Fe-4S] cluster site is built by Cys67, Cys71, and Cys74.

Belongs to the radical SAM superfamily. CofH family. As to quaternary structure, consists of two subunits, CofG and CofH. It depends on [4Fe-4S] cluster as a cofactor.

It catalyses the reaction 5-amino-6-(D-ribitylamino)uracil + L-tyrosine + S-adenosyl-L-methionine = 5-amino-5-(4-hydroxybenzyl)-6-(D-ribitylimino)-5,6-dihydrouracil + 2-iminoacetate + 5'-deoxyadenosine + L-methionine + H(+). The protein operates within cofactor biosynthesis; coenzyme F0 biosynthesis. Functionally, catalyzes the radical-mediated synthesis of 5-amino-5-(4-hydroxybenzyl)-6-(D-ribitylimino)-5,6-dihydrouracil from 5-amino-6-(D-ribitylamino)uracil and L-tyrosine. The polypeptide is 5-amino-6-(D-ribitylamino)uracil--L-tyrosine 4-hydroxyphenyl transferase 2 (Methanosarcina acetivorans (strain ATCC 35395 / DSM 2834 / JCM 12185 / C2A)).